Reading from the N-terminus, the 402-residue chain is Imidazolonepropionase (402 aa).

Fe(3+) is bound by residues His66 and His68. Residues His66 and His68 each contribute to the Zn(2+) site. 4-imidazolone-5-propanoate-binding residues include Arg75, Tyr138, and His171. Tyr138 serves as a coordination point for N-formimidoyl-L-glutamate. His236 serves as a coordination point for Fe(3+). Residue His236 participates in Zn(2+) binding. Gln239 is a binding site for 4-imidazolone-5-propanoate. A Fe(3+)-binding site is contributed by Asp311. Asp311 serves as a coordination point for Zn(2+). Residues Asn313 and Gly315 each contribute to the N-formimidoyl-L-glutamate site. Thr316 contributes to the 4-imidazolone-5-propanoate binding site.

The protein belongs to the metallo-dependent hydrolases superfamily. HutI family. Zn(2+) serves as cofactor. Requires Fe(3+) as cofactor.

Its subcellular location is the cytoplasm. It carries out the reaction 4-imidazolone-5-propanoate + H2O = N-formimidoyl-L-glutamate. The protein operates within amino-acid degradation; L-histidine degradation into L-glutamate; N-formimidoyl-L-glutamate from L-histidine: step 3/3. In terms of biological role, catalyzes the hydrolytic cleavage of the carbon-nitrogen bond in imidazolone-5-propanoate to yield N-formimidoyl-L-glutamate. It is the third step in the universal histidine degradation pathway. This is Imidazolonepropionase from Pseudomonas aeruginosa (strain UCBPP-PA14).